The sequence spans 136 residues: Small ribosomal subunit protein bS16 (136 aa).

Basic residues predominate over residues 114-123; that stretch reads TLKARRRRAK. The segment at 114-136 is disordered; it reads TLKARRRRAKKEAEAASASSAEG.

This sequence belongs to the bacterial ribosomal protein bS16 family.

The protein is Small ribosomal subunit protein bS16 of Chlorobium chlorochromatii (strain CaD3).